The following is a 203-amino-acid chain: uncharacterized protein (203 aa).

The next 4 membrane-spanning stretches (helical) occupy residues 9–29, 42–62, 86–106, and 126–146; these read YNVF…IVVA, FLFL…FFDV, SGVF…ALLV, and YPLL…SIGL. 2 stretches are compositionally biased toward basic and acidic residues: residues 164-174 and 182-191; these read GEPTAADKTDS and DQTKSKKDGD. Positions 164–203 are disordered; it reads GEPTAADKTDSRPVVVDLDQTKSKKDGDNPPQASGDMTSL. Residues 194–203 show a composition bias toward polar residues; it reads PQASGDMTSL.

It is found in the cell membrane. This is an uncharacterized protein from Mycoplasma pneumoniae (strain ATCC 29342 / M129 / Subtype 1) (Mycoplasmoides pneumoniae).